The primary structure comprises 80 residues: Caltrin (80 aa).

An N-terminal signal peptide occupies residues 1 to 32 (MMAGRRSWPAMATVLLALLVCLGELVDSKPQP).

In terms of biological role, inhibits calcium transport into spermatozoa; it does not bind directly to calcium. Binds to calmodulin. Inhibits the growth of microorganisms. Seem to act as an antibiotic by permeabilizing the bacterial membrane. The sequence is that of Caltrin (PYY2) from Bos taurus (Bovine).